A 279-amino-acid chain; its full sequence is Putative pyruvate, phosphate dikinase regulatory protein (279 aa).

ADP is bound at residue 153–160 (GISRTSKT).

Belongs to the pyruvate, phosphate/water dikinase regulatory protein family. PDRP subfamily.

The enzyme catalyses N(tele)-phospho-L-histidyl/L-threonyl-[pyruvate, phosphate dikinase] + ADP = N(tele)-phospho-L-histidyl/O-phospho-L-threonyl-[pyruvate, phosphate dikinase] + AMP + H(+). The catalysed reaction is N(tele)-phospho-L-histidyl/O-phospho-L-threonyl-[pyruvate, phosphate dikinase] + phosphate + H(+) = N(tele)-phospho-L-histidyl/L-threonyl-[pyruvate, phosphate dikinase] + diphosphate. Bifunctional serine/threonine kinase and phosphorylase involved in the regulation of the pyruvate, phosphate dikinase (PPDK) by catalyzing its phosphorylation/dephosphorylation. This chain is Putative pyruvate, phosphate dikinase regulatory protein, found in Bartonella bacilliformis (strain ATCC 35685 / KC583 / Herrer 020/F12,63).